The following is a 249-amino-acid chain: Galactan endo-beta-1,3-galactanase (249 aa).

An N-terminal signal peptide occupies residues 1–21; sequence MKLFVVLACLAAPGTFPFVDA. The GH16 domain maps to 34–247; sequence STYWNNFYPW…KARNVQVTRT (214 aa). The N-linked (GlcNAc...) asparagine glycan is linked to Asn-48. Glu-138 serves as the catalytic Nucleophile. Residue Glu-143 is the Proton donor of the active site. Asn-156 is a glycosylation site (N-linked (GlcNAc...) asparagine).

The protein belongs to the glycosyl hydrolase 16 family. In terms of processing, N-glycosylated.

It carries out the reaction The enzyme specifically hydrolyzes beta-1,3-galactan and beta-1,3-galactooligosaccharides.. In terms of biological role, specifically hydrolyzes beta-1,3-galactan in an endo-fashion. Requires at least 3 contiguous beta-1,3-residues. This Flammulina velutipes (Agaricus velutipes) protein is Galactan endo-beta-1,3-galactanase (EN3GAL).